The primary structure comprises 316 residues: Protein lifeguard 2 (316 aa).

The interval 1–53 (MTQGKLSVANKAPGTEGQQQVHGEKKEAPAVPSAPPSYEEATSGEGMKAGAFP) is disordered. Transmembrane regions (helical) follow at residues 106-126 (VYTILLIQLLVTLAVVALFTF), 138-158 (PGWYWASYAVFFATYLTLACC), and 165-185 (FPWNLILLTVFTLSMAYLTGM). Asparagine 191 is a glycosylation site (N-linked (GlcNAc...) asparagine). The next 4 helical transmembrane spans lie at 194 to 214 (SVLLCLGITALVCLSVTVFSF), 225 to 245 (GVLFVLPMTLFFSGLILAILL), 250 to 270 (VPWLHAVYAALGAGVFTLFLA), and 290 to 310 (IFGALNIYLDIIYIFTFFLQL).

Belongs to the BI1 family. LFG subfamily. Interacts with FAS/TNFRSF6 and BAX.

It localises to the cell membrane. It is found in the membrane raft. The protein localises to the postsynaptic cell membrane. Antiapoptotic protein which protects cells uniquely from Fas-induced apoptosis. Regulates Fas-mediated apoptosis in neurons by interfering with caspase-8 activation. Plays a role in cerebellar development by affecting cerebellar size, internal granular layer (IGL) thickness, and Purkinje cell (PC) development. This is Protein lifeguard 2 (FAIM2) from Pongo abelii (Sumatran orangutan).